Reading from the N-terminus, the 85-residue chain is Large ribosomal subunit protein bL27 (85 aa).

A disordered region spans residues 1–20 (MATKKAGGSTKNGRDSNPKM).

The protein belongs to the bacterial ribosomal protein bL27 family.

This Acinetobacter baumannii (strain AB307-0294) protein is Large ribosomal subunit protein bL27.